The following is a 499-amino-acid chain: Glycerol kinase 2 (499 aa).

Thr-13 lines the ADP pocket. 3 residues coordinate ATP: Thr-13, Thr-14, and Ser-15. Thr-13 contacts sn-glycerol 3-phosphate. Arg-17 is a binding site for ADP. Sn-glycerol 3-phosphate-binding residues include Arg-83, Glu-84, Tyr-134, and Asp-241. The glycerol site is built by Arg-83, Glu-84, Tyr-134, Asp-241, and Gln-242. Residues Thr-263 and Gly-306 each contribute to the ADP site. Positions 263, 306, 310, and 407 each coordinate ATP. Gly-407 is an ADP binding site.

Belongs to the FGGY kinase family.

The catalysed reaction is glycerol + ATP = sn-glycerol 3-phosphate + ADP + H(+). It functions in the pathway polyol metabolism; glycerol degradation via glycerol kinase pathway; sn-glycerol 3-phosphate from glycerol: step 1/1. Key enzyme in the regulation of glycerol uptake and metabolism. Catalyzes the phosphorylation of glycerol to yield sn-glycerol 3-phosphate. The chain is Glycerol kinase 2 from Saccharolobus solfataricus (strain ATCC 35092 / DSM 1617 / JCM 11322 / P2) (Sulfolobus solfataricus).